The sequence spans 315 residues: MDLRQFLLCLSLCTAFALSKPTEKKDRVHHEPQLSDKVHNDAQNFDYDHDAFLGAEEAKSFDQLTPEESKERLGKIVSKIDDDKDGFVTVDELKGWIKFAQKRWIHEDVERQWKGHDLNEDGLVSWEEYKNATYGYVLDDPDPDDGFNYKQMMVRDERRFKMADKDGDLIATKEEFTAFPHPDEYDYMKDIVVQETMEDIDKNADGFIDLEEYIGDMYSHDGNADEPEWVKTEREQFVEFRDKNRDGRMDKEETKDWILPSDYDHAEAEARHLVYESDQNKDGKLTKEEIVDKYDLFVGSQATDFGEALVRHDEF.

A signal peptide spans 1-19 (MDLRQFLLCLSLCTAFALS). At Tyr-47 the chain carries Phosphotyrosine. The residue at position 65 (Thr-65) is a Phosphothreonine. EF-hand domains lie at 68-103 (ESKE…AQKR), 104-139 (WIHE…YVLD), 151-186 (QMMV…DEYD), 188-223 (MKDI…HDGN), 229-264 (WVKT…SDYD), and 265-300 (HAEA…FVGS). A Phosphoserine modification is found at Ser-69. The Ca(2+) site is built by Asp-81, Asp-83, Asp-85, Glu-92, Asp-117, Asn-119, Asp-121, and Glu-128. An N-linked (GlcNAc...) asparagine glycan is attached at Asn-131. A Ca(2+)-binding site is contributed by Asp-164. Lys-165 carries the post-translational modification N6-acetyllysine. Residues Asp-166, Asp-168, Glu-175, Asp-201, Asn-203, Asp-205, Glu-212, Asp-242, Asn-244, Asp-246, Arg-248, and Glu-253 each coordinate Ca(2+). Phosphothreonine is present on Thr-254. Ser-261 and Ser-277 each carry phosphoserine. Asp-278, Asn-280, Asp-282, Lys-284, and Glu-289 together coordinate Ca(2+). Positions 312 to 315 (HDEF) match the Prevents secretion from ER motif.

The protein belongs to the CREC family. As to quaternary structure, interacts with GGCX.

The protein localises to the endoplasmic reticulum membrane. Its subcellular location is the golgi apparatus. It is found in the secreted. The protein resides in the melanosome. It localises to the sarcoplasmic reticulum lumen. Its function is as follows. Involved in regulation of vitamin K-dependent carboxylation of multiple N-terminal glutamate residues. Seems to inhibit gamma-carboxylase GGCX. Binds 7 calcium ions with a low affinity. The sequence is that of Calumenin (CALU) from Mesocricetus auratus (Golden hamster).